The sequence spans 287 residues: Carbon monoxide dehydrogenase medium chain (287 aa).

The 177-residue stretch at 1–177 (MIPPRFEYHA…VEIRVPAFAQ (177 aa)) folds into the FAD-binding PCMH-type domain. FAD contacts are provided by residues 32–36 (AGGHS) and 111–115 (TIGGD).

As to quaternary structure, dimer of heterotrimers. Each heterotrimer consists of a large, a medium and a small subunit. The cofactor is FAD.

The catalysed reaction is CO + a quinone + H2O = a quinol + CO2. In terms of biological role, catalyzes the oxidation of carbon monoxide to carbon dioxide. The chain is Carbon monoxide dehydrogenase medium chain (cutM) from Hydrogenophaga pseudoflava (Pseudomonas carboxydoflava).